Consider the following 580-residue polypeptide: Guanine nucleotide-binding protein alpha-4 subunit (580 aa).

Positions 1–10 (MSPSVSSPQL) are enriched in polar residues. The disordered stretch occupies residues 1–28 (MSPSVSSPQLRHTKSNRAISRIDRTDPL). The G-alpha domain occupies 93 to 579 (RVYKMVLLGQ…RENLKLTGLV (487 aa)). The segment at 96 to 109 (KMVLLGQAGAGKTT) is G1 motif. 101 to 108 (GQAGAGKT) contacts GTP. Disordered regions lie at residues 160–196 (KSSELSRLESSTSASTSTSASASSPKHVDTESQPNDA) and 302–325 (GRAAAARRETDGGDSQSESEKDNS). Residues 167–183 (LESSTSASTSTSASASS) show a composition bias toward low complexity. The segment at 387–395 (DILHSRVRT) is G2 motif. Residues 389–395 (LHSRVRT), 415–419 (DVGGS), 484–487 (NKID), and Ala551 each bind GTP. Thr395 contributes to the Mg(2+) binding site. Residues 411–420 (YRIYDVGGSR) form a G3 motif region. Positions 480–487 (ILFLNKID) are G4 motif. The segment at 549 to 554 (TVATST) is G5 motif.

Belongs to the G-alpha family. In terms of assembly, g proteins are composed of 3 units; alpha, beta and gamma. The alpha chain contains the guanine nucleotide binding site.

In terms of biological role, guanine nucleotide-binding proteins (G proteins) are involved as modulators or transducers in various transmembrane signaling systems. The chain is Guanine nucleotide-binding protein alpha-4 subunit (GPA4) from Mycosarcoma maydis (Corn smut fungus).